Reading from the N-terminus, the 1047-residue chain is Ubiquitin carboxyl-terminal hydrolase 48 (1047 aa).

Residues 89–416 (VGLTNLGATC…NAYMLVYKQQ (328 aa)) form the USP domain. Residue cysteine 98 is the Nucleophile of the active site. Histidine 348 (proton acceptor) is an active-site residue. DUSP domains are found at residues 457–551 (QSVD…RSSL), 567–697 (NQLN…DHDP), and 717–830 (MMAN…RIHD). A disordered region spans residues 609 to 647 (LEEDEEETKHNNSKINGEKSSPGTKADGVKGDSEDGDGE). Over residues 621 to 631 (SKINGEKSSPG) the composition is skewed to polar residues. Positions 635–647 (DGVKGDSEDGDGE) are enriched in basic and acidic residues. Positions 887-928 (PEFSVSGSDVEDEKEEPKLDGEKDPDFSQTEGGAKRQKLNDT) are disordered. The span at 901-912 (EEPKLDGEKDPD) shows a compositional bias: basic and acidic residues. A Ubiquitin-like domain is found at 961–1012 (VSANQTLKDLKIQIMHAFSVAPFDQNLSIDGRCLKDDSATLGSLGVIPESII).

It belongs to the peptidase C19 family.

The protein localises to the cytoplasm. The protein resides in the nucleus. The enzyme catalyses Thiol-dependent hydrolysis of ester, thioester, amide, peptide and isopeptide bonds formed by the C-terminal Gly of ubiquitin (a 76-residue protein attached to proteins as an intracellular targeting signal).. Functionally, recognizes and hydrolyzes the peptide bond at the C-terminal Gly of ubiquitin. Involved in the processing of poly-ubiquitin precursors as well as that of ubiquitinated proteins. The sequence is that of Ubiquitin carboxyl-terminal hydrolase 48 (usp48) from Danio rerio (Zebrafish).